The following is a 158-amino-acid chain: Low molecular weight phosphotyrosine protein phosphatase (158 aa).

Ala-2 is modified (N-acetylalanine). Cys-13 serves as the catalytic Nucleophile. Arg-19 is an active-site residue. The Proton donor role is filled by Asp-130. A phosphotyrosine mark is found at Tyr-132 and Tyr-133.

Belongs to the low molecular weight phosphotyrosine protein phosphatase family. In terms of assembly, interacts with EPHA2; dephosphorylates EPHA2. Interacts with EPHB1. Interacts with the SH3 domain of SPTAN1. There is no interaction observed for isoforms 2 or 3. In terms of processing, phosphorylated by LCK. Phosphorylation at Tyr-132 increases its phosphatase activity. Post-translationally, not phosphorylated. In terms of tissue distribution, expressed in T-lymphocytes.

Its subcellular location is the cytoplasm. It catalyses the reaction O-phospho-L-tyrosyl-[protein] + H2O = L-tyrosyl-[protein] + phosphate. The catalysed reaction is a phosphate monoester + H2O = an alcohol + phosphate. Its activity is regulated as follows. Inhibited by sulfhydryl reagents. Acts on tyrosine phosphorylated proteins, low-MW aryl phosphates and natural and synthetic acyl phosphates with differences in substrate specificity between isoform 1 and isoform 2. Its function is as follows. Does not possess phosphatase activity. In Homo sapiens (Human), this protein is Low molecular weight phosphotyrosine protein phosphatase.